A 745-amino-acid polypeptide reads, in one-letter code: Inhibitor of nuclear factor kappa-B kinase subunit alpha (745 aa).

In terms of domain architecture, Protein kinase spans 15 to 302 (WEMRERLGTG…LTLKQPRCFV (288 aa)). Residues 21–29 (LGTGGFGNV) and Lys44 contribute to the ATP site. At Thr23 the chain carries Phosphothreonine; by PKB/AKT1 and SGK1. Asp144 (proton acceptor) is an active-site residue. Residue Ser176 is modified to Phosphoserine; by MAP3K14. Thr179 is modified ((Microbial infection) O-acetylthreonine; by Yersinia YopJ). A Phosphoserine; by SGK1 modification is found at Ser180. Positions 455–476 (LLRYNANLTKMKNTLISASQQL) are leucine-zipper. Positions 738–743 (LDWSWL) are NEMO-binding.

The protein belongs to the protein kinase superfamily. Ser/Thr protein kinase family. I-kappa-B kinase subfamily. As to quaternary structure, component of the I-kappa-B-kinase (IKK) core complex consisting of CHUK, IKBKB and IKBKG; probably four alpha/CHUK-beta/IKBKB dimers are associated with four gamma/IKBKG subunits. The IKK core complex seems to associate with regulatory or adapter proteins to form a IKK-signalosome holo-complex. The IKK complex associates with TERF2IP/RAP1, leading to promote IKK-mediated phosphorylation of RELA/p65. Part of a complex composed of NCOA2, NCOA3, CHUK/IKKA, IKBKB, IKBKG and CREBBP. Part of a 70-90 kDa complex at least consisting of CHUK/IKKA, IKBKB, NFKBIA, RELA, ELP1 and MAP3K14. Directly interacts with TRPC4AP. May interact with TRAF2. Interacts with NALP2. May interact with MAVS/IPS1. Interacts with ARRB1 and ARRB2. Interacts with NLRC5; prevents CHUK phosphorylation and kinase activity. Interacts with PIAS1; this interaction induces PIAS1 phosphorylation. Interacts with ZNF268 isoform 2; the interaction is further increased in a TNF-alpha-dependent manner. Interacts with FOXO3. Interacts with IFIT5; the interaction synergizes the recruitment of IKK to MAP3K7 and enhances IKK phosphorylation. Interacts with LRRC14. Interacts with SASH1. Directly interacts with DDX3X after the physiological activation of the TLR7 and TLR8 pathways; this interaction enhances CHUK autophosphorylation. In terms of assembly, (Microbial infection) Interacts with InlC of Listeria monocytogenes. Phosphorylated by MAP3K14/NIK, AKT and to a lesser extent by MEKK1, and dephosphorylated by PP2A. Autophosphorylated. Post-translationally, ubiquitinated by TRIM56 via 'Lys-63'-linked ubiquitination, promoting activation of CHUK/IKKA. In terms of processing, (Microbial infection) Acetylation of Thr-179 by Yersinia YopJ prevents phosphorylation and activation, thus blocking the I-kappa-B signaling pathway. Widely expressed.

Its subcellular location is the cytoplasm. The protein resides in the nucleus. It carries out the reaction L-seryl-[I-kappa-B protein] + ATP = O-phospho-L-seryl-[I-kappa-B protein] + ADP + H(+). With respect to regulation, activated when phosphorylated and inactivated when dephosphorylated. Serine kinase that plays an essential role in the NF-kappa-B signaling pathway which is activated by multiple stimuli such as inflammatory cytokines, bacterial or viral products, DNA damages or other cellular stresses. Acts as a part of the canonical IKK complex in the conventional pathway of NF-kappa-B activation and phosphorylates inhibitors of NF-kappa-B on serine residues. These modifications allow polyubiquitination of the inhibitors and subsequent degradation by the proteasome. In turn, free NF-kappa-B is translocated into the nucleus and activates the transcription of hundreds of genes involved in immune response, growth control, or protection against apoptosis. Negatively regulates the pathway by phosphorylating the scaffold protein TAXBP1 and thus promoting the assembly of the A20/TNFAIP3 ubiquitin-editing complex (composed of A20/TNFAIP3, TAX1BP1, and the E3 ligases ITCH and RNF11). Therefore, CHUK plays a key role in the negative feedback of NF-kappa-B canonical signaling to limit inflammatory gene activation. As part of the non-canonical pathway of NF-kappa-B activation, the MAP3K14-activated CHUK/IKKA homodimer phosphorylates NFKB2/p100 associated with RelB, inducing its proteolytic processing to NFKB2/p52 and the formation of NF-kappa-B RelB-p52 complexes. In turn, these complexes regulate genes encoding molecules involved in B-cell survival and lymphoid organogenesis. Also participates in the negative feedback of the non-canonical NF-kappa-B signaling pathway by phosphorylating and destabilizing MAP3K14/NIK. Within the nucleus, phosphorylates CREBBP and consequently increases both its transcriptional and histone acetyltransferase activities. Modulates chromatin accessibility at NF-kappa-B-responsive promoters by phosphorylating histones H3 at 'Ser-10' that are subsequently acetylated at 'Lys-14' by CREBBP. Additionally, phosphorylates the CREBBP-interacting protein NCOA3. Also phosphorylates FOXO3 and may regulate this pro-apoptotic transcription factor. Phosphorylates RIPK1 at 'Ser-25' which represses its kinase activity and consequently prevents TNF-mediated RIPK1-dependent cell death. Phosphorylates AMBRA1 following mitophagy induction, promoting AMBRA1 interaction with ATG8 family proteins and its mitophagic activity. The sequence is that of Inhibitor of nuclear factor kappa-B kinase subunit alpha (CHUK) from Homo sapiens (Human).